Here is a 343-residue protein sequence, read N- to C-terminus: Cilia- and flagella-associated protein 36 (343 aa).

Phosphoserine occurs at positions 85 and 147. A coiled-coil region spans residues 147 to 181 (SDLEQEEMKILREVLRKSKEEYDQEEERKRKKQSS). The tract at residues 165-191 (KEEYDQEEERKRKKQSSEGKMEEPPIY) is disordered. Residue Ser201 is modified to Phosphoserine. A disordered region spans residues 286–323 (SMRKDMRAKQIQNTEQKGKPTREAEEMTEKPEMTAEEK). A compositionally biased stretch (basic and acidic residues) spans 301 to 323 (QKGKPTREAEEMTEKPEMTAEEK).

It belongs to the CFAP36 family. Interacts with ARL3. Widely expressed (at protein level).

The protein resides in the nucleus. It localises to the cytoplasm. Its subcellular location is the cell projection. The protein localises to the cilium. It is found in the flagellum. Its function is as follows. May act as an effector for ARL3. This is Cilia- and flagella-associated protein 36 from Rattus norvegicus (Rat).